The following is a 359-amino-acid chain: Peptide chain release factor 1 (359 aa).

Gln-235 carries the N5-methylglutamine modification.

The protein belongs to the prokaryotic/mitochondrial release factor family. Post-translationally, methylated by PrmC. Methylation increases the termination efficiency of RF1.

Its subcellular location is the cytoplasm. Functionally, peptide chain release factor 1 directs the termination of translation in response to the peptide chain termination codons UAG and UAA. The protein is Peptide chain release factor 1 of Chelativorans sp. (strain BNC1).